Consider the following 391-residue polypeptide: Multidrug resistance protein MdtL (391 aa).

12 helical membrane passes run 4-24 (FLIC…MYLV), 42-62 (IAFS…GKVA), 69-89 (PVAI…SLAE), 93-113 (LFLA…VVAF), 131-151 (LLNG…HLIM), 158-178 (SLFW…LFIL), 203-222 (FFLS…LTFV), 245-265 (ALTA…LGIF), 269-289 (TLMI…AVSP), 293-313 (VSLF…GVAM), 331-351 (LGIA…VVGI), and 356-376 (MLIG…MFVA).

It belongs to the major facilitator superfamily. DHA1 family. MdtL (TC 2.A.1.2.22) subfamily.

The protein resides in the cell inner membrane. Functionally, confers resistance to chloramphenicol. The sequence is that of Multidrug resistance protein MdtL from Escherichia coli O45:K1 (strain S88 / ExPEC).